We begin with the raw amino-acid sequence, 302 residues long: MRRWAWAAVVVLLGPQLVLLGGVGARREAQRTQQPGQRADPPNATASASSREGLPEAPKPSQASGPEFSDAHMTWLNFVRRPDDGALRKRCGSRDKKPRDLFGPPGPPGAEVTAETLLHEFQELLKEATERRFSGLLDPLLPQGAGLRLVGEAFHCRLQGPRRVDKRTLVELHGFQAPAAQGAFLRGSGLSLASGRFTAPVSGIFQFSASLHVDHSELQGKARLRARDVVCVLICIESLCQRHTCLEAVSGLESNSRVFTLQVQGLLQLQAGQYASVFVDNGSGAVLTIQAGSSFSGLLLGT.

The first 20 residues, 1–20 (MRRWAWAAVVVLLGPQLVLL), serve as a signal peptide directing secretion. Disordered stretches follow at residues 28–68 (EAQR…GPEF) and 86–110 (ALRKRCGSRDKKPRDLFGPPGPPGA). Asn43 carries N-linked (GlcNAc...) asparagine glycosylation. Basic and acidic residues predominate over residues 86-100 (ALRKRCGSRDKKPRD). A C1q domain is found at 147 to 302 (LRLVGEAFHC…SSFSGLLLGT (156 aa)).

It belongs to the adipolin/erythroferrone family. As to quaternary structure, homomultimer; disulfide-linked. May interact with ERFE. Processed into Adipolin fC1QTNF12 and Adipolin gC1QTNF12 by FURIN. Insulin enhances endogenous C1QTNF12 cleavage. Predominantly expressed by adipose tissues.

It is found in the secreted. Functionally, insulin-sensitizing adipocyte-secreted protein (adipokine) that regulates glucose metabolism in liver and adipose tissue. Promotes glucose uptake in adipocytes and suppresses de novo glucose production in hepatocytes via the PI3K-Akt signaling pathway. Administration lead to reduction of blood glucose. Able to attenuate inflammation in fat tissue. In Homo sapiens (Human), this protein is Adipolin.